The chain runs to 586 residues: Phosphomethylpyrimidine synthase (586 aa).

The disordered stretch occupies residues 1-59 (MKQSVSAEQIELKSSLPGSKKVYVDGPREGMKVPMREIEQSDTNGVPNPPIRVYDTSGP). The span at 22–39 (VYVDGPREGMKVPMREIE) shows a compositional bias: basic and acidic residues. Substrate-binding positions include Asn193, Met222, Tyr251, His287, 307 to 309 (SRG), 348 to 351 (DGLR), and Glu387. His391 is a binding site for Zn(2+). Tyr414 contacts substrate. His455 contacts Zn(2+). Residues Cys535, Cys538, and Cys543 each coordinate [4Fe-4S] cluster.

It belongs to the ThiC family. [4Fe-4S] cluster is required as a cofactor.

The catalysed reaction is 5-amino-1-(5-phospho-beta-D-ribosyl)imidazole + S-adenosyl-L-methionine = 4-amino-2-methyl-5-(phosphooxymethyl)pyrimidine + CO + 5'-deoxyadenosine + formate + L-methionine + 3 H(+). It functions in the pathway cofactor biosynthesis; thiamine diphosphate biosynthesis. Its function is as follows. Catalyzes the synthesis of the hydroxymethylpyrimidine phosphate (HMP-P) moiety of thiamine from aminoimidazole ribotide (AIR) in a radical S-adenosyl-L-methionine (SAM)-dependent reaction. This is Phosphomethylpyrimidine synthase from Bacillus cereus (strain Q1).